The following is a 460-amino-acid chain: C4-dicarboxylate transport protein (460 aa).

The next 8 membrane-spanning stretches (helical) occupy residues L21–F38, F53–G75, Y88–V110, I153–A175, V196–F218, L231–I253, V301–M323, and F363–L385. A disordered region spans residues P438 to V460.

The protein belongs to the dicarboxylate/amino acid:cation symporter (DAACS) (TC 2.A.23) family.

Its subcellular location is the cell inner membrane. Responsible for the transport of dicarboxylates such as succinate, fumarate, and malate from the periplasm across the membrane. This is C4-dicarboxylate transport protein from Pseudomonas syringae pv. tomato (strain ATCC BAA-871 / DC3000).